A 452-amino-acid polypeptide reads, in one-letter code: LIM/homeobox protein lim-7 (452 aa).

2 LIM zinc-binding domains span residues 54–116 and 117–179; these read AVCA…LFTT and RCSR…LDNP. The tract at residues 184-268 is disordered; sequence SVPDYSKLNN…KKKDKQATRV (85 aa). Composition is skewed to low complexity over residues 192 to 205 and 217 to 227; these read NNNN…SSSN and TLTSLDNNTSS. A DNA-binding region (homeobox) is located at residues 265-324; sequence ATRVRTVLNENQLKILRDCYSINSRPDATLKERLVEMTGLSARVIRVWFQNKRCKDKKRQ. Residues 347 to 376 are LIM interaction domain (LID); that stretch reads GIGPLMVQPATPHIDNTLGGPIDIQHFAQW.

As to quaternary structure, interacts (via LID domain) with ceh-14 (via LIM zinc-binding domains 1 and 2). Expressed in gonadal sheath cells, URA motoneurons, and 10 additional cells near the isthmus and terminal bulb of the pharynx. Expressed in the ALA and BDU cells.

The protein resides in the nucleus. In terms of biological role, probable DNA-binding transcriptional activator. The protein is LIM/homeobox protein lim-7 of Caenorhabditis elegans.